The primary structure comprises 357 residues: Methylthioribose-1-phosphate isomerase (357 aa).

Residues 49 to 51, R89, and Q197 contribute to the substrate site; that span reads RGA. D238 serves as the catalytic Proton donor. Residue 248–249 participates in substrate binding; it reads NK.

It belongs to the eIF-2B alpha/beta/delta subunits family. MtnA subfamily.

The catalysed reaction is 5-(methylsulfanyl)-alpha-D-ribose 1-phosphate = 5-(methylsulfanyl)-D-ribulose 1-phosphate. It functions in the pathway amino-acid biosynthesis; L-methionine biosynthesis via salvage pathway; L-methionine from S-methyl-5-thio-alpha-D-ribose 1-phosphate: step 1/6. Its function is as follows. Catalyzes the interconversion of methylthioribose-1-phosphate (MTR-1-P) into methylthioribulose-1-phosphate (MTRu-1-P). The protein is Methylthioribose-1-phosphate isomerase of Leptospira biflexa serovar Patoc (strain Patoc 1 / Ames).